Reading from the N-terminus, the 395-residue chain is Dihydroorotate dehydrogenase (quinone), mitochondrial (395 aa).

A mitochondrion; not cleaved-targeting transit peptide spans 1-10 (MAWRQLKKRA). The Mitochondrial matrix portion of the chain corresponds to 1 to 10 (MAWRQLKKRA). A helical transmembrane segment spans residues 11-30 (QDAMVILGGGGLLFASYLTA). The Mitochondrial intermembrane portion of the chain corresponds to 31 to 395 (TGDEHFYAEL…TDAIGADHRR (365 aa)). FMN is bound by residues 95–99 (AGFDK) and S119. A substrate-binding site is contributed by K99. 144-148 (NRYGF) serves as a coordination point for substrate. FMN-binding residues include N180 and N211. Substrate is bound at residue 211–216 (NVSSPN). Residue S214 is the Nucleophile of the active site. The FMN site is built by K254 and T282. Position 283-284 (283-284 (NS)) interacts with substrate. Residues G305, G334, and 355–356 (YT) contribute to the FMN site.

It belongs to the dihydroorotate dehydrogenase family. Type 2 subfamily. As to quaternary structure, monomer. Requires FMN as cofactor. In terms of processing, the uncleaved transit peptide is required for mitochondrial targeting and proper membrane integration.

The protein localises to the mitochondrion inner membrane. The catalysed reaction is (S)-dihydroorotate + a quinone = orotate + a quinol. It participates in pyrimidine metabolism; UMP biosynthesis via de novo pathway; orotate from (S)-dihydroorotate (quinone route): step 1/1. Catalyzes the conversion of dihydroorotate to orotate with quinone as electron acceptor. Required for UMP biosynthesis via de novo pathway. This is Dihydroorotate dehydrogenase (quinone), mitochondrial (DHODH) from Bos taurus (Bovine).